Here is a 394-residue protein sequence, read N- to C-terminus: ATP-dependent RNA helicase fal1 (394 aa).

The Q motif motif lies at 21–49; sequence SSFEEMNLKEDLLRGIYAYGYETPSAVQS. The Helicase ATP-binding domain occupies 52–222; it reads IIQICKGRDV…NKFTTNPVRI (171 aa). An ATP-binding site is contributed by 65-72; the sequence is AQSGTGKT. Ser67 carries the phosphoserine modification. The DEAD box motif lies at 170–173; that stretch reads DEAD. Residues 233–394 enclose the Helicase C-terminal domain; it reads GLKQYFIAVE…EMPMNIGDMV (162 aa).

This sequence belongs to the DEAD box helicase family. DDX48/FAL1 subfamily.

The protein resides in the nucleus. The protein localises to the nucleolus. The catalysed reaction is ATP + H2O = ADP + phosphate + H(+). ATP-dependent RNA helicase involved in 40S ribosomal subunit biogenesis. Required for the processing and cleavage of 35S pre-rRNA at sites A0, A1, and A2, leading to mature 18S rRNA. The chain is ATP-dependent RNA helicase fal1 (tif412) from Schizosaccharomyces pombe (strain 972 / ATCC 24843) (Fission yeast).